The chain runs to 302 residues: Recombination-associated protein RdgC (302 aa).

It belongs to the RdgC family.

The protein resides in the cytoplasm. Its subcellular location is the nucleoid. Functionally, may be involved in recombination. The sequence is that of Recombination-associated protein RdgC from Xylella fastidiosa (strain M23).